Reading from the N-terminus, the 262-residue chain is Tetrahydromethanopterin S-methyltransferase subunit C (262 aa).

The next 6 membrane-spanning stretches (helical) occupy residues 35–57 (FVPSLAMLIGGLLAAGACVAGAN), 70–92 (GVPSIGMVSLGMGTISALAGVLI), 97–119 (GLPVLATPILAAVIAVVVGFIVG), 140–162 (LSLMGALAILGFCTAFAGGFSAD), 172–194 (GVIALAFIAAGMSILHPFNACIG), and 214–236 (WLIFSIAKLDIVSIVVAAIFWLY).

This sequence belongs to the MtrC family. The complex is composed of 8 subunits; MtrA, MtrB, MtrC, MtrD, MtrE, MtrF, MtrG and MtrH.

The protein localises to the cell membrane. The catalysed reaction is 5-methyl-5,6,7,8-tetrahydromethanopterin + coenzyme M + 2 Na(+)(in) = 5,6,7,8-tetrahydromethanopterin + methyl-coenzyme M + 2 Na(+)(out). The protein operates within one-carbon metabolism; methanogenesis from CO(2); methyl-coenzyme M from 5,10-methylene-5,6,7,8-tetrahydromethanopterin: step 2/2. Part of a complex that catalyzes the formation of methyl-coenzyme M and tetrahydromethanopterin from coenzyme M and methyl-tetrahydromethanopterin. This is an energy-conserving, sodium-ion translocating step. The polypeptide is Tetrahydromethanopterin S-methyltransferase subunit C (Methanococcus maripaludis (strain DSM 14266 / JCM 13030 / NBRC 101832 / S2 / LL)).